Here is a 609-residue protein sequence, read N- to C-terminus: 1-deoxy-D-xylulose-5-phosphate synthase (609 aa).

Thiamine diphosphate contacts are provided by residues His-77 and 118 to 120 (GHS). Asp-149 provides a ligand contact to Mg(2+). Thiamine diphosphate-binding positions include 150-151 (GA), Asn-178, Tyr-259, and Glu-342. Asn-178 lines the Mg(2+) pocket.

This sequence belongs to the transketolase family. DXPS subfamily. In terms of assembly, homodimer. It depends on Mg(2+) as a cofactor. Thiamine diphosphate serves as cofactor.

The catalysed reaction is D-glyceraldehyde 3-phosphate + pyruvate + H(+) = 1-deoxy-D-xylulose 5-phosphate + CO2. It functions in the pathway metabolic intermediate biosynthesis; 1-deoxy-D-xylulose 5-phosphate biosynthesis; 1-deoxy-D-xylulose 5-phosphate from D-glyceraldehyde 3-phosphate and pyruvate: step 1/1. Catalyzes the acyloin condensation reaction between C atoms 2 and 3 of pyruvate and glyceraldehyde 3-phosphate to yield 1-deoxy-D-xylulose-5-phosphate (DXP). The chain is 1-deoxy-D-xylulose-5-phosphate synthase from Listeria monocytogenes serotype 4b (strain CLIP80459).